The following is a 399-amino-acid chain: S-adenosylmethionine synthase (399 aa).

Histidine 17 serves as a coordination point for ATP. Aspartate 19 is a binding site for Mg(2+). Glutamate 45 is a binding site for K(+). 2 residues coordinate L-methionine: glutamate 58 and glutamine 101. The segment at 101-111 is flexible loop; that stretch reads QSPDIAQGVDK. ATP contacts are provided by residues 176 to 178, 243 to 244, aspartate 252, 258 to 259, and lysine 279; these read DGK, RF, and RK. Position 252 (aspartate 252) interacts with L-methionine. L-methionine is bound at residue lysine 283.

This sequence belongs to the AdoMet synthase family. Homotetramer; dimer of dimers. The cofactor is Mg(2+). K(+) serves as cofactor.

The protein localises to the cytoplasm. It carries out the reaction L-methionine + ATP + H2O = S-adenosyl-L-methionine + phosphate + diphosphate. It functions in the pathway amino-acid biosynthesis; S-adenosyl-L-methionine biosynthesis; S-adenosyl-L-methionine from L-methionine: step 1/1. In terms of biological role, catalyzes the formation of S-adenosylmethionine (AdoMet) from methionine and ATP. The overall synthetic reaction is composed of two sequential steps, AdoMet formation and the subsequent tripolyphosphate hydrolysis which occurs prior to release of AdoMet from the enzyme. This is S-adenosylmethionine synthase from Staphylococcus epidermidis (strain ATCC 35984 / DSM 28319 / BCRC 17069 / CCUG 31568 / BM 3577 / RP62A).